Here is a 436-residue protein sequence, read N- to C-terminus: UPF0597 protein YhaM (436 aa).

It belongs to the UPF0597 family.

This chain is UPF0597 protein YhaM, found in Salmonella choleraesuis (strain SC-B67).